Here is a 149-residue protein sequence, read N- to C-terminus: Transcriptional repressor NrdR (149 aa).

A zinc finger spans residues 3 to 34; that stretch reads CPFCGHAATQVIDTRMSEEGDTVRRRRRCESC. An ATP-cone domain is found at 49-139; that stretch reads PAVVKKNGSR…VYRSFEDVSE (91 aa).

It belongs to the NrdR family. The cofactor is Zn(2+).

Negatively regulates transcription of bacterial ribonucleotide reductase nrd genes and operons by binding to NrdR-boxes. This is Transcriptional repressor NrdR from Ralstonia nicotianae (strain ATCC BAA-1114 / GMI1000) (Ralstonia solanacearum).